The chain runs to 122 residues: MTKLSRKLQTQKRHRRLRRFLIGDATRPRLSVFRSNNHIYAQVIDDSAQTTICSASTVDKELREKSEKLPSDCNSSSIVGKLLAKRAIKKGVKQVIFDRGGNIYHGRVKALADAAREAGLEF.

This sequence belongs to the universal ribosomal protein uL18 family. Part of the 50S ribosomal subunit; part of the 5S rRNA/L5/L18/L25 subcomplex. Contacts the 5S and 23S rRNAs.

This is one of the proteins that bind and probably mediate the attachment of the 5S RNA into the large ribosomal subunit, where it forms part of the central protuberance. In Prochlorococcus marinus (strain MIT 9215), this protein is Large ribosomal subunit protein uL18.